Consider the following 541-residue polypeptide: Membrane protein insertase YidC (541 aa).

The next 6 membrane-spanning stretches (helical) occupy residues 6–26 (NILL…WQAD), 325–345 (LVVD…LLMF), 349–369 (FVGN…GLLF), 420–440 (GGCL…WVLL), 457–477 (LSVQ…MFIM), and 500–520 (VIFT…WLVG).

The protein belongs to the OXA1/ALB3/YidC family. Type 1 subfamily. As to quaternary structure, interacts with the Sec translocase complex via SecD. Specifically interacts with transmembrane segments of nascent integral membrane proteins during membrane integration.

The protein localises to the cell inner membrane. Functionally, required for the insertion and/or proper folding and/or complex formation of integral membrane proteins into the membrane. Involved in integration of membrane proteins that insert both dependently and independently of the Sec translocase complex, as well as at least some lipoproteins. Aids folding of multispanning membrane proteins. The chain is Membrane protein insertase YidC from Shewanella sp. (strain W3-18-1).